Reading from the N-terminus, the 403-residue chain is Imidazolonepropionase (403 aa).

Residues H69 and H71 each coordinate Fe(3+). Zn(2+) contacts are provided by H69 and H71. 4-imidazolone-5-propanoate contacts are provided by R78, Y141, and H174. Y141 is an N-formimidoyl-L-glutamate binding site. H239 contributes to the Fe(3+) binding site. H239 contacts Zn(2+). Q242 is a binding site for 4-imidazolone-5-propanoate. D314 is a Fe(3+) binding site. D314 contacts Zn(2+). N-formimidoyl-L-glutamate-binding residues include N316 and G318. S319 contributes to the 4-imidazolone-5-propanoate binding site.

This sequence belongs to the metallo-dependent hydrolases superfamily. HutI family. Requires Zn(2+) as cofactor. Fe(3+) serves as cofactor.

It localises to the cytoplasm. The enzyme catalyses 4-imidazolone-5-propanoate + H2O = N-formimidoyl-L-glutamate. Its pathway is amino-acid degradation; L-histidine degradation into L-glutamate; N-formimidoyl-L-glutamate from L-histidine: step 3/3. Catalyzes the hydrolytic cleavage of the carbon-nitrogen bond in imidazolone-5-propanoate to yield N-formimidoyl-L-glutamate. It is the third step in the universal histidine degradation pathway. The polypeptide is Imidazolonepropionase (Legionella pneumophila (strain Paris)).